We begin with the raw amino-acid sequence, 475 residues long: Ribulose bisphosphate carboxylase large chain (475 aa).

A propeptide spanning residues 1–2 (MS) is cleaved from the precursor. Proline 3 is modified (N-acetylproline). An N6,N6,N6-trimethyllysine modification is found at lysine 14. Substrate contacts are provided by asparagine 123 and threonine 173. Lysine 175 (proton acceptor) is an active-site residue. A substrate-binding site is contributed by lysine 177. The Mg(2+) site is built by lysine 201, aspartate 203, and glutamate 204. The residue at position 201 (lysine 201) is an N6-carboxylysine. Residue histidine 294 is the Proton acceptor of the active site. Residues arginine 295, histidine 327, and serine 379 each coordinate substrate.

This sequence belongs to the RuBisCO large chain family. Type I subfamily. In terms of assembly, heterohexadecamer of 8 large chains and 8 small chains; disulfide-linked. The disulfide link is formed within the large subunit homodimers. Requires Mg(2+) as cofactor. In terms of processing, the disulfide bond which can form in the large chain dimeric partners within the hexadecamer appears to be associated with oxidative stress and protein turnover.

Its subcellular location is the plastid. The protein resides in the chloroplast. It carries out the reaction 2 (2R)-3-phosphoglycerate + 2 H(+) = D-ribulose 1,5-bisphosphate + CO2 + H2O. It catalyses the reaction D-ribulose 1,5-bisphosphate + O2 = 2-phosphoglycolate + (2R)-3-phosphoglycerate + 2 H(+). In terms of biological role, ruBisCO catalyzes two reactions: the carboxylation of D-ribulose 1,5-bisphosphate, the primary event in carbon dioxide fixation, as well as the oxidative fragmentation of the pentose substrate in the photorespiration process. Both reactions occur simultaneously and in competition at the same active site. The chain is Ribulose bisphosphate carboxylase large chain from Chlorokybus atmophyticus (Soil alga).